We begin with the raw amino-acid sequence, 201 residues long: Large ribosomal subunit protein uL4 (201 aa).

Residues 44 to 71 are disordered; it reads RAQKTRAEVSGSGKKPWRQKGTGRARSG.

Belongs to the universal ribosomal protein uL4 family. In terms of assembly, part of the 50S ribosomal subunit.

In terms of biological role, one of the primary rRNA binding proteins, this protein initially binds near the 5'-end of the 23S rRNA. It is important during the early stages of 50S assembly. It makes multiple contacts with different domains of the 23S rRNA in the assembled 50S subunit and ribosome. Functionally, forms part of the polypeptide exit tunnel. The polypeptide is Large ribosomal subunit protein uL4 (Proteus mirabilis (strain HI4320)).